We begin with the raw amino-acid sequence, 176 residues long: Mitochondrial inner membrane protein Mpv17 (176 aa).

4 helical membrane-spanning segments follow: residues 18-38 (VQVLTAGSLMGLGDVISQQLV), 53-73 (TMASLGCGFVGPVVGGWYRVL), 94-114 (GGFAPCFLGCFLPLVGTLNGL), and 131-151 (LITNYYLWPAVQLANFYLVPL).

Belongs to the peroxisomal membrane protein PXMP2/4 family.

Its subcellular location is the mitochondrion inner membrane. Functionally, non-selective channel that modulates the membrane potential under normal conditions and oxidative stress, and is involved in mitochondrial homeostasis. Involved in mitochondrial deoxynucleoside triphosphates (dNTP) pool homeostasis and mitochondrial DNA (mtDNA) maintenance. May be involved in the regulation of reactive oxygen species metabolism and the control of oxidative phosphorylation. The protein is Mitochondrial inner membrane protein Mpv17 of Bos taurus (Bovine).